The primary structure comprises 420 residues: E3 ubiquitin-protein ligase pellino homolog 2 (420 aa).

One can recognise an FHA; atypical domain in the interval 15–202 (EPVKYGELVV…MHPRGGFTEE (188 aa)).

Belongs to the pellino family. As to quaternary structure, interacts with TRAF6, IRAK1, IRAK4 and MAP3K7. Interacts with BCL10; this interaction is impaired by SOCS3. In terms of processing, phosphorylated by IRAK1 and IRAK4 enhancing its E3 ligase activity.

It catalyses the reaction S-ubiquitinyl-[E2 ubiquitin-conjugating enzyme]-L-cysteine + [acceptor protein]-L-lysine = [E2 ubiquitin-conjugating enzyme]-L-cysteine + N(6)-ubiquitinyl-[acceptor protein]-L-lysine.. Its pathway is protein modification; protein ubiquitination. In terms of biological role, E3 ubiquitin ligase catalyzing the covalent attachment of ubiquitin moieties onto substrate proteins. Involved in the TLR and IL-1 signaling pathways via interaction with the complex containing IRAK kinases and TRAF6. Mediates IL1B-induced IRAK1 'Lys-63'-linked polyubiquitination and possibly 'Lys-48'-linked ubiquitination. May be important for LPS- and IL1B-induced MAP3K7-dependent, but not MAP3K3-dependent, NF-kappa-B activation. Can activate the MAP (mitogen activated protein) kinase pathway leading to activation of ELK1. This Homo sapiens (Human) protein is E3 ubiquitin-protein ligase pellino homolog 2 (PELI2).